A 241-amino-acid polypeptide reads, in one-letter code: Small ribosomal subunit protein uS5 (241 aa).

Positions 1–53 are disordered; that stretch reads MSDNEKETQVAEETQNTQAAAESNNEDRKSRRGQRGEGRRGERRNRREESHEN. Low complexity predominate over residues 11–22; sequence AEETQNTQAAAE. A compositionally biased stretch (basic and acidic residues) spans 25–53; it reads NEDRKSRRGQRGEGRRGERRNRREESHEN. The 64-residue stretch at 55 to 118 folds into the S5 DRBM domain; sequence MLDRVVTINR…LDAKKHMFTV (64 aa).

It belongs to the universal ribosomal protein uS5 family. In terms of assembly, part of the 30S ribosomal subunit. Contacts proteins S4 and S8.

Functionally, with S4 and S12 plays an important role in translational accuracy. Its function is as follows. Located at the back of the 30S subunit body where it stabilizes the conformation of the head with respect to the body. In Bifidobacterium adolescentis (strain ATCC 15703 / DSM 20083 / NCTC 11814 / E194a), this protein is Small ribosomal subunit protein uS5.